Consider the following 499-residue polypeptide: Bifunctional purine biosynthesis protein PurH (499 aa).

In terms of domain architecture, MGS-like spans 1–144 (MIKRALISVF…KNFKDVVVLT (144 aa)).

The protein belongs to the PurH family.

The catalysed reaction is (6R)-10-formyltetrahydrofolate + 5-amino-1-(5-phospho-beta-D-ribosyl)imidazole-4-carboxamide = 5-formamido-1-(5-phospho-D-ribosyl)imidazole-4-carboxamide + (6S)-5,6,7,8-tetrahydrofolate. It carries out the reaction IMP + H2O = 5-formamido-1-(5-phospho-D-ribosyl)imidazole-4-carboxamide. Its pathway is purine metabolism; IMP biosynthesis via de novo pathway; 5-formamido-1-(5-phospho-D-ribosyl)imidazole-4-carboxamide from 5-amino-1-(5-phospho-D-ribosyl)imidazole-4-carboxamide (10-formyl THF route): step 1/1. The protein operates within purine metabolism; IMP biosynthesis via de novo pathway; IMP from 5-formamido-1-(5-phospho-D-ribosyl)imidazole-4-carboxamide: step 1/1. This chain is Bifunctional purine biosynthesis protein PurH, found in Clostridium botulinum (strain Langeland / NCTC 10281 / Type F).